A 283-amino-acid chain; its full sequence is Probable endonuclease 4 (283 aa).

Residues histidine 69, histidine 109, glutamate 145, aspartate 179, histidine 182, histidine 216, aspartate 229, histidine 231, and glutamate 261 each contribute to the Zn(2+) site.

This sequence belongs to the AP endonuclease 2 family. Zn(2+) serves as cofactor.

It carries out the reaction Endonucleolytic cleavage to 5'-phosphooligonucleotide end-products.. In terms of biological role, endonuclease IV plays a role in DNA repair. It cleaves phosphodiester bonds at apurinic or apyrimidinic (AP) sites, generating a 3'-hydroxyl group and a 5'-terminal sugar phosphate. The chain is Probable endonuclease 4 from Desulfosudis oleivorans (strain DSM 6200 / JCM 39069 / Hxd3) (Desulfococcus oleovorans).